A 209-amino-acid polypeptide reads, in one-letter code: Orotate phosphoribosyltransferase (209 aa).

Residues R96, K100, H102, and 122 to 130 contribute to the 5-phospho-alpha-D-ribose 1-diphosphate site; that span reads EDLISTGGS. S126 contacts orotate.

This sequence belongs to the purine/pyrimidine phosphoribosyltransferase family. PyrE subfamily. In terms of assembly, homodimer. Mg(2+) is required as a cofactor.

It catalyses the reaction orotidine 5'-phosphate + diphosphate = orotate + 5-phospho-alpha-D-ribose 1-diphosphate. Its pathway is pyrimidine metabolism; UMP biosynthesis via de novo pathway; UMP from orotate: step 1/2. Catalyzes the transfer of a ribosyl phosphate group from 5-phosphoribose 1-diphosphate to orotate, leading to the formation of orotidine monophosphate (OMP). The protein is Orotate phosphoribosyltransferase of Cytophaga hutchinsonii (strain ATCC 33406 / DSM 1761 / CIP 103989 / NBRC 15051 / NCIMB 9469 / D465).